A 265-amino-acid chain; its full sequence is Transcription factor BHLH089 (265 aa).

The interval M1–D132 is disordered. Gly residues-rich tracts occupy residues L17–G29 and S44–A53. Residues S95 to R105 show a composition bias toward polar residues. The basic motif; degenerate stretch occupies residues Q142–R155. The region spanning Q142–L192 is the bHLH domain. A helix-loop-helix motif region spans residues E156–L192.

This sequence belongs to the bHLH protein family. As to quaternary structure, interacts with RSS3.

It localises to the nucleus. In terms of biological role, transcription factor that may regulate jasmonate-regulated genes. The chain is Transcription factor BHLH089 from Oryza sativa subsp. japonica (Rice).